Here is a 723-residue protein sequence, read N- to C-terminus: Catalase-peroxidase (723 aa).

Positions 96 to 225 (WHAAGSYRVA…LAAVMMGLIY (130 aa)) form a cross-link, tryptophyl-tyrosyl-methioninium (Trp-Tyr) (with M-251). H97 acts as the Proton acceptor in catalysis. The segment at residues 225-251 (YVNPEGVDGNPDPLKTAEDVRVTFARM) is a cross-link (tryptophyl-tyrosyl-methioninium (Tyr-Met) (with W-96)). Position 266 (H266) interacts with heme b.

This sequence belongs to the peroxidase family. Peroxidase/catalase subfamily. Homodimer or homotetramer. Requires heme b as cofactor. In terms of processing, formation of the three residue Trp-Tyr-Met cross-link is important for the catalase, but not the peroxidase activity of the enzyme.

The enzyme catalyses H2O2 + AH2 = A + 2 H2O. It carries out the reaction 2 H2O2 = O2 + 2 H2O. In terms of biological role, bifunctional enzyme with both catalase and broad-spectrum peroxidase activity. This chain is Catalase-peroxidase, found in Alkalilimnicola ehrlichii (strain ATCC BAA-1101 / DSM 17681 / MLHE-1).